Consider the following 326-residue polypeptide: Phosphatidylinositol:ceramide inositolphosphotransferase (326 aa).

6 helical membrane passes run 33 to 53, 82 to 102, 115 to 135, 169 to 189, 199 to 219, and 222 to 242; these read LLLA…GVHY, SVFT…FIYH, VLAF…STQL, VLFG…LVFV, RLIK…IIAS, and HYSV…FFID. The active site involves His-181. Residues His-222 and Asp-226 contribute to the active site. The segment at 306-326 is disordered; sequence MNGKHGEDINHTLSDATPNGT. Residues 316-326 are compositionally biased toward polar residues; that stretch reads HTLSDATPNGT.

It belongs to the sphingomyelin synthase family.

It is found in the golgi apparatus. Its subcellular location is the trans-Golgi network membrane. Functionally, catalyzes the transfer of the phosphorylinositol group from phosphatidylinositol (PI) to phytoceramide, an essential step in sphingolipid biosynthesis. May play an important role in modulating plant programmed cell death (PCD) associated with defense (e.g. toward Golovinomyces cichoracearum) by promoting sphingolipid metabolism and regulating ceramide accumulation. The chain is Phosphatidylinositol:ceramide inositolphosphotransferase (ERH1) from Oryza sativa subsp. indica (Rice).